A 618-amino-acid polypeptide reads, in one-letter code: uncharacterized protein (618 aa).

The segment at residues 18–47 (SCQRCRQRKIKCDRLHPCFQCVKSNSQCFY) is a DNA-binding region (zn(2)-C6 fungal-type). Phosphoserine is present on Ser-598.

It localises to the nucleus. This is an uncharacterized protein from Schizosaccharomyces pombe (strain 972 / ATCC 24843) (Fission yeast).